We begin with the raw amino-acid sequence, 379 residues long: Cytochrome b (379 aa).

Helical transmembrane passes span Phe33 to Met53, Trp77 to Val98, Trp113 to Leu133, and Phe178 to Leu198. Heme b is bound by residues His83 and His97. Residues His182 and His196 each contribute to the heme b site. His201 serves as a coordination point for a ubiquinone. Helical transmembrane passes span Thr226–Phe246, Leu288–Asn308, Val320–Gly340, and Phe347–Pro367.

It belongs to the cytochrome b family. In terms of assembly, the cytochrome bc1 complex contains 11 subunits: 3 respiratory subunits (MT-CYB, CYC1 and UQCRFS1), 2 core proteins (UQCRC1 and UQCRC2) and 6 low-molecular weight proteins (UQCRH/QCR6, UQCRB/QCR7, UQCRQ/QCR8, UQCR10/QCR9, UQCR11/QCR10 and a cleavage product of UQCRFS1). This cytochrome bc1 complex then forms a dimer. The cofactor is heme b.

It localises to the mitochondrion inner membrane. Component of the ubiquinol-cytochrome c reductase complex (complex III or cytochrome b-c1 complex) that is part of the mitochondrial respiratory chain. The b-c1 complex mediates electron transfer from ubiquinol to cytochrome c. Contributes to the generation of a proton gradient across the mitochondrial membrane that is then used for ATP synthesis. The chain is Cytochrome b (MT-CYB) from Akodon lutescens puer (Altiplano grass mouse).